Reading from the N-terminus, the 235-residue chain is Ribose-5-phosphate isomerase A (235 aa).

Substrate-binding positions include 32–35 (TGST), 89–92 (DGAD), and 102–105 (KGGG). E111 functions as the Proton acceptor in the catalytic mechanism. K129 lines the substrate pocket.

It belongs to the ribose 5-phosphate isomerase family. In terms of assembly, homodimer.

It carries out the reaction aldehydo-D-ribose 5-phosphate = D-ribulose 5-phosphate. Its pathway is carbohydrate degradation; pentose phosphate pathway; D-ribose 5-phosphate from D-ribulose 5-phosphate (non-oxidative stage): step 1/1. Functionally, catalyzes the reversible conversion of ribose-5-phosphate to ribulose 5-phosphate. The protein is Ribose-5-phosphate isomerase A of Synechocystis sp. (strain ATCC 27184 / PCC 6803 / Kazusa).